Here is a 341-residue protein sequence, read N- to C-terminus: Cyclic GMP-AMP synthase (341 aa).

Ser56 serves as a coordination point for ATP. Residues Asp71 and Asp73 contribute to the active site. Asp73 is a binding site for Mg(2+). Asn109 contacts ATP. The active site involves Asp123. Asp123 is a Mg(2+) binding site. 2 residues coordinate ATP: Leu192 and Asp238.

Belongs to the CD-NTase family. B04 subfamily. Monomer. Mg(2+) is required as a cofactor.

It carries out the reaction GTP + ATP = 3',3'-cGAMP + 2 diphosphate. Functionally, cyclic nucleotide synthase (second messenger synthase) of a CBASS antivirus system. CBASS (cyclic oligonucleotide-based antiphage signaling system) provides immunity against bacteriophage. The CD-NTase protein synthesizes cyclic nucleotides in response to infection; these serve as specific second messenger signals. The signals activate a diverse range of effectors, leading to bacterial cell death and thus abortive phage infection. A type II-A(GA) CBASS system. Catalyzes the synthesis of 3'3'-cyclic GMP-AMP (3'3'-cGAMP) from GTP and ATP, a second messenger in cell signal transduction. May make another product. Controls the activity of the CBASS cGAMP-activated phospholipase effector protein. This is Cyclic GMP-AMP synthase from Bacteroides fragilis.